A 212-amino-acid polypeptide reads, in one-letter code: Kynurenine formamidase (212 aa).

Trp18 serves as a coordination point for substrate. Residues His48, His52, and Asp54 each contribute to the Zn(2+) site. His58 acts as the Proton donor/acceptor in catalysis. 2 residues coordinate Zn(2+): His160 and Glu172.

It belongs to the Cyclase 1 superfamily. KynB family. As to quaternary structure, homodimer. The cofactor is Zn(2+).

It carries out the reaction N-formyl-L-kynurenine + H2O = L-kynurenine + formate + H(+). It functions in the pathway amino-acid degradation; L-tryptophan degradation via kynurenine pathway; L-kynurenine from L-tryptophan: step 2/2. In terms of biological role, catalyzes the hydrolysis of N-formyl-L-kynurenine to L-kynurenine, the second step in the kynurenine pathway of tryptophan degradation. This is Kynurenine formamidase from Paraburkholderia xenovorans (strain LB400).